A 211-amino-acid chain; its full sequence is MSNISNEAVILIKDVKPGSKNLNIVFIVLEIGRVTKTKDGHEVRSCRVADKSGSIAISVWDELGSLIQPGDIIRLTRGYASIWKGCLTLYTGRGGDLQKIGEFCMVYSEVPNFSEPNPELLAQANQQNKTSKEQRGNSPPNQNAGNGTVPVFSNNNAAPVPRDPNFGASGRPNGRAPGNGPPPVTAGGTPAPPKPTVSISNGRDPRRASKR.

Residues 27-97 (IVLEIGRVTK…TLYTGRGGDL (71 aa)) constitute a DNA-binding region (OB). The disordered stretch occupies residues 125 to 211 (NQQNKTSKEQ…GRDPRRASKR (87 aa)). Residues 136 to 157 (GNSPPNQNAGNGTVPVFSNNNA) are compositionally biased toward polar residues. The span at 179–195 (NGPPPVTAGGTPAPPKP) shows a compositional bias: pro residues.

Belongs to the SOSS-B family. SOSS-B2 subfamily. In terms of assembly, component of the SOSS complex, composed of soss-b (soss-b1/nabp2 or soss-b2/nabp1), soss-a/ints3 and soss-c/inip. SOSS complexes containing soss-b1/nabp2 are more abundant than complexes containing soss-b2/nabp1.

Its subcellular location is the nucleus. Component of the SOSS complex, a multiprotein complex that functions downstream of the MRN complex to promote DNA repair and G2/M checkpoint. In the SOSS complex, acts as a sensor of single-stranded DNA that binds to single-stranded DNA. The SOSS complex associates with DNA lesions and influences diverse endpoints in the cellular DNA damage response including cell-cycle checkpoint activation, recombinational repair and maintenance of genomic stability. Required for efficient homologous recombination-dependent repair of double-strand breaks (DSBs). The protein is SOSS complex subunit B2 (nabp1) of Danio rerio (Zebrafish).